Reading from the N-terminus, the 214-residue chain is Pyridoxine/pyridoxamine 5'-phosphate oxidase (214 aa).

Residues 9–12 (RKNY) and Lys67 contribute to the substrate site. Residues 62-67 (RIVLLK), 77-78 (YT), Lys83, Lys84, and Gln106 contribute to the FMN site. Tyr124, Arg128, and Ser132 together coordinate substrate. FMN contacts are provided by residues 141–142 (QS) and Trp186. 192–194 (RLH) provides a ligand contact to substrate. Arg196 is an FMN binding site.

This sequence belongs to the pyridoxamine 5'-phosphate oxidase family. As to quaternary structure, homodimer. The cofactor is FMN.

It catalyses the reaction pyridoxamine 5'-phosphate + O2 + H2O = pyridoxal 5'-phosphate + H2O2 + NH4(+). The enzyme catalyses pyridoxine 5'-phosphate + O2 = pyridoxal 5'-phosphate + H2O2. The protein operates within cofactor metabolism; pyridoxal 5'-phosphate salvage; pyridoxal 5'-phosphate from pyridoxamine 5'-phosphate: step 1/1. It participates in cofactor metabolism; pyridoxal 5'-phosphate salvage; pyridoxal 5'-phosphate from pyridoxine 5'-phosphate: step 1/1. Catalyzes the oxidation of either pyridoxine 5'-phosphate (PNP) or pyridoxamine 5'-phosphate (PMP) into pyridoxal 5'-phosphate (PLP). The protein is Pyridoxine/pyridoxamine 5'-phosphate oxidase of Leptospira borgpetersenii serovar Hardjo-bovis (strain JB197).